The sequence spans 199 residues: Shikimate kinase (199 aa).

32 to 37 (GSGKTS) is a binding site for ATP. Thr-36 lines the Mg(2+) pocket. 3 residues coordinate substrate: Asp-54, Arg-78, and Gly-100. Position 138 (Arg-138) interacts with ATP. Arg-157 lines the substrate pocket.

Belongs to the shikimate kinase family. In terms of assembly, monomer. It depends on Mg(2+) as a cofactor.

It localises to the cytoplasm. It catalyses the reaction shikimate + ATP = 3-phosphoshikimate + ADP + H(+). Its pathway is metabolic intermediate biosynthesis; chorismate biosynthesis; chorismate from D-erythrose 4-phosphate and phosphoenolpyruvate: step 5/7. Catalyzes the specific phosphorylation of the 3-hydroxyl group of shikimic acid using ATP as a cosubstrate. The polypeptide is Shikimate kinase (Synechococcus sp. (strain CC9605)).